The primary structure comprises 530 residues: Cytochrome P450 2U1 (530 aa).

The next 4 membrane-spanning stretches (helical) occupy residues 21-41, 99-119, 247-267, and 328-348; these read LQAV…DWVW, VYGN…LSDF, ICLH…YLPF, and LFYI…NSLL. Position 476 (Cys-476) interacts with heme. A helical membrane pass occupies residues 481–501; that stretch reads LAKMELFLMFVSLMQSFTFAL.

This sequence belongs to the cytochrome P450 family. Heme serves as cofactor. As to expression, specifically expressed in thymus and brain. In brain, expressed in cortex, cerebellum, olfactory bulbs, pons and medulla and the limbic structures (at protein level).

It localises to the endoplasmic reticulum membrane. Its subcellular location is the microsome membrane. The protein localises to the mitochondrion inner membrane. It catalyses the reaction an omega-methyl-long-chain fatty acid + reduced [NADPH--hemoprotein reductase] + O2 = an omega-hydroxy-long-chain fatty acid + oxidized [NADPH--hemoprotein reductase] + H2O + H(+). It carries out the reaction (5Z,8Z,11Z,14Z)-eicosatetraenoate + reduced [NADPH--hemoprotein reductase] + O2 = 19-hydroxy-(5Z,8Z,11Z,14Z)-eicosatetraenoate + oxidized [NADPH--hemoprotein reductase] + H2O + H(+). The enzyme catalyses (5Z,8Z,11Z,14Z)-eicosatetraenoate + reduced [NADPH--hemoprotein reductase] + O2 = 20-hydroxy-(5Z,8Z,11Z,14Z)-eicosatetraenoate + oxidized [NADPH--hemoprotein reductase] + H2O + H(+). The catalysed reaction is N-[(5Z,8Z,11Z,14Z)-eicosatetraenoyl]-serotonin + reduced [NADPH--hemoprotein reductase] + O2 = 2-oxo-N-[(5Z,8Z,11Z,14Z)-eicosatetraenoyl]-serotonin + oxidized [NADPH--hemoprotein reductase] + H2O + H(+). A cytochrome P450 monooxygenase involved in the metabolism of arachidonic acid and its conjugates. Mechanistically, uses molecular oxygen inserting one oxygen atom into a substrate, and reducing the second into a water molecule, with two electrons provided by NADPH via cytochrome P450 reductase (CPR; NADPH-ferrihemoprotein reductase). Acts as an omega and omega-1 hydroxylase for arachidonic acid and possibly for other long chain fatty acids. May modulate the arachidonic acid signaling pathway and play a role in other fatty acid signaling processes. May down-regulate the biological activities of N-arachidonoyl-serotonin, an endocannabinoid that has anti-nociceptive effects through inhibition of fatty acid amide hydrolase FAAH, TRPV1 receptor and T-type calcium channels. Catalyzes C-2 oxidation of the indole ring of N-arachidonoyl-serotonin forming a less active product 2-oxo-N-arachidonoyl-serotonin. The polypeptide is Cytochrome P450 2U1 (Cyp2u1) (Rattus norvegicus (Rat)).